Consider the following 616-residue polypeptide: Glucoamylase P (616 aa).

Residues 1–29 (MRLLPSSCAGALSLLCSLAIAAPTELKAR) form the signal peptide. W149 is a binding site for substrate. A glycan (N-linked (GlcNAc...) asparagine) is linked at N200. D205 acts as the Proton acceptor in catalysis. E208 (proton donor) is an active-site residue. A glycan (N-linked (GlcNAc...) asparagine) is linked at N427. One can recognise a CBM20 domain in the interval 501-608 (VTSSCQVSIT…AVTTDDAWMG (108 aa)).

Belongs to the glycosyl hydrolase 15 family.

It is found in the secreted. The catalysed reaction is Hydrolysis of terminal (1-&gt;4)-linked alpha-D-glucose residues successively from non-reducing ends of the chains with release of beta-D-glucose.. This is Glucoamylase P (GAMP) from Amorphotheca resinae (Creosote fungus).